Consider the following 148-residue polypeptide: Large ribosomal subunit protein bL9 (148 aa).

This sequence belongs to the bacterial ribosomal protein bL9 family.

Its function is as follows. Binds to the 23S rRNA. In Staphylococcus haemolyticus (strain JCSC1435), this protein is Large ribosomal subunit protein bL9.